We begin with the raw amino-acid sequence, 784 residues long: MSGGHQLQLAVLWPWLLMATLHAGFGHTGRVLAAAVESERSAEQKAVIRVIPLKMDPTGKLNLTLEGVFAGVAEVTPAEGKLMQSHPLYLCNASDDDNLEPGFISIVKLESPRRAPRPCLSLASKARMAGERGANAVLFDITEDRSAAEQLQQPLGLTKPVVLIWGSDAAKLMEFVYKNRKAYVWIELKEPPAGANYDVWILLTVVGTVFVIILASVLRIRCRPHHSRPDPLQQRTARAISQLATRRYQAGCRRARAEWPDSGSSCSSTPVCAICLEEFSEGQELRVISCLHEFHRTCVDPWLYQHRTCPLCMFNIVEGDSFSQAPAASPSYQEPGRRLHLIRQHPGHAHYHLPSAYLLGPSRTSVARTPRPRPFLPSQEPSMGSRHQRLPRTSHLRAPEEQQHLAVSPHPYAQGWGLNRLRCTSQHPAACPVALRRARPHESSGSGESYCTERSGYLADGPASDSSSGPCHGSSSDSVVNCTDVSLQGIHGSSSTFRSSLSSDFDPLVYCSPEGDLQGKGIQPSVTSRPRSLDSVVPRGETQVSSHIHYHRHRHHHYKRQFQWHGRKPGPETGIPQSMPAASHTQLEPSLPDQQLITPNPTASSMLPNPQRPRALTEPAPGLAEASSPSPSPKPNPSGLLNLQKSSLTVRHPHRKRRGGPSEPLPTSLPPDLTVHTACPVFPHYSPRLAYPWPPEVHPLMFRPPGPDRRLLHEVPGPCYSSSQPVWLYLNPCQPLGPCLPGEGHSKWTFDSPEGRRCPYSHCQVLPAQPGSEEELEELCEQAV.

The N-terminal stretch at methionine 1–alanine 23 is a signal peptide. Topologically, residues glycine 24–tyrosine 197 are extracellular. Residues asparagine 62 and asparagine 92 are each glycosylated (N-linked (GlcNAc...) asparagine). The cysteines at positions 91 and 119 are disulfide-linked. Residues aspartate 198–leucine 218 form a helical membrane-spanning segment. Residues arginine 219 to valine 784 lie on the Cytoplasmic side of the membrane. Residues cysteine 272–methionine 313 form an RING-type; atypical zinc finger. Disordered regions lie at residues threonine 364–valine 407, alanine 459–serine 478, and aspartate 516–proline 671. Over residues arginine 386 to histidine 395 the composition is skewed to basic residues. The segment covering serine 464–serine 478 has biased composition (low complexity). The span at isoleucine 548 to lysine 568 shows a compositional bias: basic residues. Residues serine 583–proline 608 show a composition bias toward polar residues. The segment covering glutamate 618–proline 629 has biased composition (low complexity).

It belongs to the ZNRF3 family. Interacts with AKAP8L, NONO and SFPQ. Interacts with FZD5. Identified in a complex composed of RNF43, LGR5 and RSPO1. Interacts with RSPO2. Interacts with LMBR1L. Autoubiquitinated. In terms of tissue distribution, expressed in crypt base columnar cells of small intestinal epithelium. Crypt base columnar cells are small cycling cells residing between the terminally differentiated Paneth cells at crypt bottoms. Colocalizes with Lgr5-positive stem cells.

The protein localises to the cell membrane. Its subcellular location is the endoplasmic reticulum membrane. It localises to the nucleus envelope. It carries out the reaction S-ubiquitinyl-[E2 ubiquitin-conjugating enzyme]-L-cysteine + [acceptor protein]-L-lysine = [E2 ubiquitin-conjugating enzyme]-L-cysteine + N(6)-ubiquitinyl-[acceptor protein]-L-lysine.. Its pathway is protein modification; protein ubiquitination. E3 ubiquitin-protein ligase that acts as a negative regulator of the Wnt signaling pathway by mediating the ubiquitination, endocytosis and subsequent degradation of Wnt receptor complex components Frizzled. Acts on both canonical and non-canonical Wnt signaling pathway. Along with RSPO2 and ZNRF3, constitutes a master switch that governs limb specification. In Mus musculus (Mouse), this protein is E3 ubiquitin-protein ligase RNF43 (Rnf43).